We begin with the raw amino-acid sequence, 676 residues long: Envelope glycoprotein (676 aa).

Residues 1–34 (MACSTLSKSPKDKIDPRDLLIPLILFLSLKGARS) form the signal peptide. Residues 35 to 270 (AAPGSSPHQV…SYQNLGPRIP (236 aa)) are receptor-binding domain (RBD). Residues 35 to 620 (AAPGSSPHQV…FNRSPWFTTL (586 aa)) are Extracellular-facing. N46 carries N-linked (GlcNAc...) asparagine; by host glycosylation. Cystine bridges form between C80–C132, C106–C121, C107–C117, C155–C175, and C167–C180. Zn(2+) is bound at residue H89. D120 is a binding site for Zn(2+). The N-linked (GlcNAc...) asparagine; by host glycan is linked to N202. C212 and C218 are oxidised to a cystine. Positions 287–321 (NPLPKPAKSPPASSSTPTLISPSPTPTQPPPAGTG) are disordered. Over residues 296 to 308 (PPASSSTPTLISP) the composition is skewed to low complexity. The span at 309–318 (SPTPTQPPPA) shows a compositional bias: pro residues. N336 carries N-linked (GlcNAc...) asparagine; by host glycosylation. Cystine bridges form between C346–C349, C346–C573, C376–C430, C395–C407, C437–C450, and C565–C572. The CXXC motif lies at 346–349 (CWLC). N368 and N375 each carry an N-linked (GlcNAc...) asparagine; by host glycan. Residues N408 and N444 are each glycosylated (N-linked (GlcNAc...) asparagine; by host). The fusion peptide stretch occupies residues 482 to 502 (VSLTLALLLGGLTMGGIAAGV). Residues 513–547 (QQFQQLHAAVQDDLKEVEKSITNLEKSLTSLSEVV) adopt a coiled-coil conformation. The segment at 548 to 564 (LQNRRGLDLLFLKEGGL) is immunosuppression. Positions 565 to 573 (CAALKEECC) match the CX6CC motif. Residues 621–641 (ISTIMGPLIILLLILLFGPCI) traverse the membrane as a helical segment. The S-palmitoyl cysteine; by host moiety is linked to residue C640. Over 642–676 (LNRLVQFVKDRISVVQALVLTQQYHQLKPLEYEPQ) the chain is Cytoplasmic. A YXXL motif; contains endocytosis signal motif is present at residues 665 to 668 (YHQL).

The mature envelope protein (Env) consists of a trimer of SU-TM heterodimers attached by a labile interchain disulfide bond. Specific enzymatic cleavages in vivo yield mature proteins. Envelope glycoproteins are synthesized as an inactive precursor that is N-glycosylated and processed likely by host cell furin or by a furin-like protease in the Golgi to yield the mature SU and TM proteins. The cleavage site between SU and TM requires the minimal sequence [KR]-X-[KR]-R. The R-peptide is released from the C-terminus of the cytoplasmic tail of the TM protein upon particle formation as a result of proteolytic cleavage by the viral protease. Cleavage of this peptide is required for TM to become fusogenic. Post-translationally, the CXXC motif is highly conserved across a broad range of retroviral envelope proteins. It is thought to participate in the formation of a labile disulfide bond possibly with the CX6CC motif present in the transmembrane protein. Isomerization of the intersubunit disulfide bond to an SU intrachain disulfide bond is thought to occur upon receptor recognition in order to allow membrane fusion. In terms of processing, the transmembrane protein is palmitoylated. The R-peptide is palmitoylated.

The protein resides in the virion membrane. It localises to the host cell membrane. In terms of biological role, the surface protein (SU) attaches the virus to the host cell by binding to its receptor. This interaction triggers the refolding of the transmembrane protein (TM) and is thought to activate its fusogenic potential by unmasking its fusion peptide. Fusion occurs at the host cell plasma membrane. Its function is as follows. The transmembrane protein (TM) acts as a class I viral fusion protein. Under the current model, the protein has at least 3 conformational states: pre-fusion native state, pre-hairpin intermediate state, and post-fusion hairpin state. During viral and target cell membrane fusion, the coiled coil regions (heptad repeats) assume a trimer-of-hairpins structure, positioning the fusion peptide in close proximity to the C-terminal region of the ectodomain. The formation of this structure appears to drive apposition and subsequent fusion of viral and target cell membranes. Membranes fusion leads to delivery of the nucleocapsid into the cytoplasm. This Friend murine leukemia virus (isolate FB29) (FrMLV) protein is Envelope glycoprotein (env).